A 563-amino-acid polypeptide reads, in one-letter code: Lipoprotein LpqB (563 aa).

Positions 1–19 (MRRMKALTAAMTAALLVSG) are cleaved as a signal peptide. The N-palmitoyl cysteine moiety is linked to residue Cys-20. A lipid anchor (S-diacylglycerol cysteine) is attached at Cys-20.

Belongs to the LpqB lipoprotein family.

Its subcellular location is the cell membrane. This chain is Lipoprotein LpqB, found in Corynebacterium efficiens (strain DSM 44549 / YS-314 / AJ 12310 / JCM 11189 / NBRC 100395).